The chain runs to 575 residues: Urease subunit alpha (575 aa).

In terms of domain architecture, Urease spans 137 to 575 (GGIDSHIHWI…LPMAQRYFLF (439 aa)). The Ni(2+) site is built by histidine 142, histidine 144, and lysine 225. Lysine 225 carries the N6-carboxylysine modification. Histidine 227 serves as a coordination point for substrate. Residues histidine 254 and histidine 280 each coordinate Ni(2+). The active-site Proton donor is histidine 328. Aspartate 368 lines the Ni(2+) pocket.

It belongs to the metallo-dependent hydrolases superfamily. Urease alpha subunit family. Heterotrimer of UreA (gamma), UreB (beta) and UreC (alpha) subunits. Three heterotrimers associate to form the active enzyme. It depends on Ni cation as a cofactor. Post-translationally, carboxylation allows a single lysine to coordinate two nickel ions.

Its subcellular location is the cytoplasm. It carries out the reaction urea + 2 H2O + H(+) = hydrogencarbonate + 2 NH4(+). It functions in the pathway nitrogen metabolism; urea degradation; CO(2) and NH(3) from urea (urease route): step 1/1. The chain is Urease subunit alpha from Leptothrix cholodnii (strain ATCC 51168 / LMG 8142 / SP-6) (Leptothrix discophora (strain SP-6)).